The following is a 188-amino-acid chain: CXXC-type zinc finger protein 4 (188 aa).

The tract at residues 1-20 is disordered; the sequence is MHRNDSQRLGKPGGAPESLQ. The CXXC-type zinc finger occupies 122–163; it reads AKKKRKRCGVCVPCKRLINCGVCSSCRNRKTGHQICKFRKCE. Zn(2+)-binding residues include Cys-129, Cys-132, Cys-135, Cys-141, Cys-144, Cys-147, Cys-157, and Cys-162.

It localises to the cytoplasm. In terms of biological role, acts as a negative regulator of the Wnt signaling pathway required for anterior neural structure formation. Binds preferentially to DNA containing cytidine-phosphate-guanosine (CpG) dinucleotides over CpH (H=A, T, and C), hemimethylated-CpG and hemimethylated-hydroxymethyl-CpG. The chain is CXXC-type zinc finger protein 4 (cxxc4) from Xenopus tropicalis (Western clawed frog).